A 208-amino-acid polypeptide reads, in one-letter code: Uracil phosphoribosyltransferase (208 aa).

5-phospho-alpha-D-ribose 1-diphosphate contacts are provided by residues Arg-78, Arg-103, and 130 to 138 (DPMLATGGS). Uracil is bound by residues Ile-193 and 198–200 (GDA). Asp-199 contacts 5-phospho-alpha-D-ribose 1-diphosphate.

This sequence belongs to the UPRTase family. Mg(2+) serves as cofactor.

The enzyme catalyses UMP + diphosphate = 5-phospho-alpha-D-ribose 1-diphosphate + uracil. Its pathway is pyrimidine metabolism; UMP biosynthesis via salvage pathway; UMP from uracil: step 1/1. Its activity is regulated as follows. Allosterically activated by GTP. Catalyzes the conversion of uracil and 5-phospho-alpha-D-ribose 1-diphosphate (PRPP) to UMP and diphosphate. The chain is Uracil phosphoribosyltransferase from Shewanella piezotolerans (strain WP3 / JCM 13877).